The primary structure comprises 469 residues: Glutamine synthetase (469 aa).

The GS beta-grasp domain maps to 15-96 (EDVKFIDVRF…INFFIHDPIT (82 aa)). A GS catalytic domain is found at 104-469 (PRNVAKKAEA…PYEYEQYYDV (366 aa)). Mg(2+) contacts are provided by Glu129 and Glu131. Glu205 is an ATP binding site. Mg(2+) contacts are provided by Glu210 and Glu218. 221 to 223 (YKF) serves as a coordination point for ATP. Residues 262–263 (NG) and Gly263 contribute to the L-glutamate site. Residue His267 participates in Mg(2+) binding. ATP-binding positions include 269-271 (HQS) and Ser271. Residues Arg320, Glu326, and Arg338 each coordinate L-glutamate. Arg338, Arg343, and Lys352 together coordinate ATP. A Mg(2+)-binding site is contributed by Glu357. An L-glutamate-binding site is contributed by Arg359. Tyr397 bears the O-AMP-tyrosine mark.

This sequence belongs to the glutamine synthetase family. As to quaternary structure, oligomer of 12 subunits arranged in the form of two hexagons. Mg(2+) serves as cofactor.

The protein resides in the cytoplasm. The catalysed reaction is L-glutamate + NH4(+) + ATP = L-glutamine + ADP + phosphate + H(+). With respect to regulation, the activity of this enzyme could be controlled by adenylation under conditions of abundant glutamine. Its function is as follows. Catalyzes the ATP-dependent biosynthesis of glutamine from glutamate and ammonia. This is Glutamine synthetase from Streptomyces viridochromogenes.